The following is a 496-amino-acid chain: uncharacterized protein (496 aa).

The N-terminal stretch at 1–19 (MTTGYILIAAILILGGVIA) is a signal peptide. Residues 45-67 (AVLVTILTGGLVSATTLAILFIA) form a helical membrane-spanning segment. The interval 113-137 (LETTRTDKKQVETQRDQAKKEKLKA) is disordered.

The protein localises to the membrane. This is an uncharacterized protein from Nostoc sp. (strain PCC 7120 / SAG 25.82 / UTEX 2576).